The sequence spans 130 residues: MAKRKIVKKKVVKKNIAKGIVYISATFNNTMVTVTDEMGNAIAWSSAGGLGFKGSKKSTPYAAQQAVEDALNKAKEHGIKEVGIKVQGPGSGRETAVKSVGAMEGIKVTFLKDITPLAHNGCRPPKRRRV.

The protein belongs to the universal ribosomal protein uS11 family. In terms of assembly, part of the 30S ribosomal subunit. Interacts with proteins S7 and S18. Binds to IF-3.

Functionally, located on the platform of the 30S subunit, it bridges several disparate RNA helices of the 16S rRNA. Forms part of the Shine-Dalgarno cleft in the 70S ribosome. This Campylobacter jejuni subsp. jejuni serotype O:6 (strain 81116 / NCTC 11828) protein is Small ribosomal subunit protein uS11.